Here is an 80-residue protein sequence, read N- to C-terminus: Cytochrome c-553 (80 aa).

The heme c site is built by Cys13, Cys16, His17, and Met58.

Post-translationally, binds 1 heme c group covalently per subunit.

It is found in the periplasm. In terms of biological role, natural electron acceptor for a formate dehydrogenase. In Desulfomicrobium norvegicum (strain DSM 1741 / NCIMB 8310) (Desulfovibrio baculatus (strain Norway 4)), this protein is Cytochrome c-553.